Here is an 871-residue protein sequence, read N- to C-terminus: Patatin-like phospholipase domain-containing protein CNBE2340 (871 aa).

The tract at residues 20–53 (NEDSPLSPRSFSLPPESPQLSTASPIHQRVSRKR) is disordered. Residues 23-33 (SPLSPRSFSLP) show a composition bias toward low complexity. The helical transmembrane segment at 68–88 (WPLLFFIFFIIYLEFSAYVIT) threads the bilayer. Positions 243–435 (LCLSGGASFG…REDIPLGSLH (193 aa)) constitute a PNPLA domain. The GXSXG motif lies at 274–278 (GTSAG). Catalysis depends on serine 276, which acts as the Nucleophile. The Proton acceptor role is filled by aspartate 422. Disordered regions lie at residues 586–707 (ALSH…NFGD), 720–748 (LSSP…QRFR), and 760–871 (VSES…QDGA). 2 stretches are compositionally biased toward polar residues: residues 594-606 (NDPA…TNPE) and 687-706 (PTHS…SNFG). Positions 721 to 748 (SSPFRSIRSNTSSSSNNVQSPSSSQRFR) are enriched in low complexity. Over residues 798–820 (VESHSDRSEDEMLHSGANVKEEY) the composition is skewed to basic and acidic residues.

This sequence belongs to the PLPL family.

The protein resides in the membrane. In terms of biological role, probable lipid hydrolase. The polypeptide is Patatin-like phospholipase domain-containing protein CNBE2340 (Cryptococcus neoformans var. neoformans serotype D (strain B-3501A) (Filobasidiella neoformans)).